A 240-amino-acid chain; its full sequence is DNA repair protein RecO (240 aa).

The protein belongs to the RecO family.

Its function is as follows. Involved in DNA repair and RecF pathway recombination. This is DNA repair protein RecO from Wolbachia pipientis wMel.